The chain runs to 394 residues: Na(+)/H(+) antiporter NhaA (394 aa).

Transmembrane regions (helical) follow at residues 11 to 31 (LEAASGILLLVSALLAMIFAN), 59 to 79 (LLMWVNDGFMAVFFILVGMEV), 95 to 115 (IFPAVAALGGMIIPALVYWFI), 125 to 145 (GWAIPMATDIAFALGIVALLS), 155 to 175 (FLLALAIIDDLGAIIVIALFF), 177 to 197 (HEMSMQALTIASIAIVILVAM), 203 to 220 (TGLINYAIIGTILWASVL), 254 to 274 (ALAPWCSFAILPLFAFSNAGV), 296 to 316 (LIIGKPVGVFLFSYVAVLLGI), 328 to 348 (IFAIAVLCGIGFTMSMFIAGL), and 365 to 385 (LGILMGTFVAAIIGYFLLKIT).

It belongs to the NhaA Na(+)/H(+) (TC 2.A.33) antiporter family.

Its subcellular location is the cell inner membrane. The enzyme catalyses Na(+)(in) + 2 H(+)(out) = Na(+)(out) + 2 H(+)(in). In terms of biological role, na(+)/H(+) antiporter that extrudes sodium in exchange for external protons. The protein is Na(+)/H(+) antiporter NhaA of Actinobacillus pleuropneumoniae serotype 3 (strain JL03).